The sequence spans 253 residues: Retinoic acid early-inducible protein 1-beta (253 aa).

The first 28 residues, 1–28 (MAKAAVTKRHHFMIQKLLILLSYGYTNG), serve as a signal peptide directing secretion. C37 and C56 are joined by a disulfide. N38, N70, N83, N143, and N156 each carry an N-linked (GlcNAc...) asparagine glycan. Residues C90 and C190 are joined by a disulfide bond. Positions 198–230 (LKQSKEKPRSTSRSPSITQLTSTSPLPPPSHST) are disordered. A compositionally biased stretch (low complexity) spans 211–221 (SPSITQLTSTS). The GPI-anchor amidated serine moiety is linked to residue S229. The propeptide at 230-253 (TSKKGFISVGLIFISLLFAFAFAM) is removed in mature form.

The protein belongs to the NKG2D ligand family. Glycosylated. As to expression, expressed predominantly in embryonic brain.

It localises to the cell membrane. In terms of biological role, acts as a ligand for KLRK1. This Mus musculus (Mouse) protein is Retinoic acid early-inducible protein 1-beta (Raet1b).